We begin with the raw amino-acid sequence, 188 residues long: RWD domain-containing protein 4 (188 aa).

The RWD domain occupies 9-111; it reads MELEALRSIY…EYAKDNKEQF (103 aa). Residues 132–167 are disordered; it reads TPSAAPSSKKKDKKEQLSKAQKRKLADKTDHKGELP. Basic and acidic residues predominate over residues 155–166; sequence KLADKTDHKGEL.

In Rattus norvegicus (Rat), this protein is RWD domain-containing protein 4 (Rwdd4).